We begin with the raw amino-acid sequence, 160 residues long: Major pollen allergen Car b 1 isoforms 1A and 1B (160 aa).

Belongs to the BetVI family.

This Carpinus betulus (European hornbeam) protein is Major pollen allergen Car b 1 isoforms 1A and 1B.